The following is a 166-amino-acid chain: Small ribosomal subunit protein uS5 (166 aa).

Residues 11–74 (FLEKLIAVNR…EKARRNMVDV (64 aa)) form the S5 DRBM domain.

This sequence belongs to the universal ribosomal protein uS5 family. Part of the 30S ribosomal subunit. Contacts proteins S4 and S8.

In terms of biological role, with S4 and S12 plays an important role in translational accuracy. Its function is as follows. Located at the back of the 30S subunit body where it stabilizes the conformation of the head with respect to the body. This Alteromonas mediterranea (strain DSM 17117 / CIP 110805 / LMG 28347 / Deep ecotype) protein is Small ribosomal subunit protein uS5.